The primary structure comprises 295 residues: Mitochondrial dicarboxylate transporter (295 aa).

3 Solcar repeats span residues 4–88, 96–188, and 198–286; these read KQVK…LKEH, TNMW…FKNF, and KKNS…LKKY. 6 helical membrane-spanning segments follow: residues 8 to 24, 63 to 82, 98 to 122, 163 to 182, 204 to 224, and 262 to 280; these read YPWWYGGAAGIFAVMNT, GLSASLLRQCTYTTARFGMY, MWYLLGASMVSGALGGLAGNFADLI, GWKPNMVRGVLMTASQVVTY, LTSSLLAGFVATTVCSPADVI, and WVPSFTRLAPFTMLIFFAM.

The protein belongs to the mitochondrial carrier (TC 2.A.29) family. Homodimer.

It is found in the mitochondrion inner membrane. Mitochondrial dicarboxylic transporter catalyzing the exchange of dicarboxylic acids like malate and succinate for inorganic phosphate. Required for growth on ethanol and acetate. The chain is Mitochondrial dicarboxylate transporter (DIC1) from Candida glabrata (strain ATCC 2001 / BCRC 20586 / JCM 3761 / NBRC 0622 / NRRL Y-65 / CBS 138) (Yeast).